Here is an 804-residue protein sequence, read N- to C-terminus: Ral guanine nucleotide dissociation stimulator-like 1 (804 aa).

One can recognise an N-terminal Ras-GEF domain in the interval 101–231 (KIRSIRAGTL…RAQSLLEQLR (131 aa)). One can recognise a Ras-GEF domain in the interval 270 to 539 (EVDLVAEQLT…YVLSCEVEGL (270 aa)). 2 disordered regions span residues 564-611 (NDST…TPTH) and 640-676 (SASI…GFPP). Composition is skewed to low complexity over residues 581 to 607 (PTGS…SDGM) and 640 to 649 (SASISLASPT). The segment covering 661 to 671 (ISLTPLMSPTS) has biased composition (polar residues). In terms of domain architecture, Ras-associating spans 684–771 (DACIIRVSLE…FDFLLRLRGS (88 aa)).

In terms of biological role, probable guanine nucleotide exchange factor. This is Ral guanine nucleotide dissociation stimulator-like 1 (rgl1) from Danio rerio (Zebrafish).